The following is a 601-amino-acid chain: A-type ATP synthase subunit A (601 aa).

235 to 242 (GGFGTGKT) lines the ATP pocket.

It belongs to the ATPase alpha/beta chains family. As to quaternary structure, has multiple subunits with at least A(3), B(3), C, D, E, F, H, I and proteolipid K(x).

The protein resides in the cell membrane. It carries out the reaction ATP + H2O + 4 H(+)(in) = ADP + phosphate + 5 H(+)(out). Its function is as follows. Component of the A-type ATP synthase that produces ATP from ADP in the presence of a proton gradient across the membrane. The A chain is the catalytic subunit. The polypeptide is A-type ATP synthase subunit A (Thermofilum pendens (strain DSM 2475 / Hrk 5)).